The following is a 379-amino-acid chain: Guanine nucleotide-binding protein subunit alpha-12 (379 aa).

A lipid anchor (S-palmitoyl cysteine) is attached at Cys-11. The region spanning 54 to 379 is the G-alpha domain; it reads RLVKILLLGA…QENLKDIMLQ (326 aa). The G1 motif stretch occupies residues 57–70; that stretch reads KILLLGAGESGKST. Residues 65–70 and 200–203 contribute to the GTP site; these read ESGKST and LLAR. Ser-69 contacts Mg(2+). Residues 198-206 form a G2 motif region; it reads DILLARKAT. Thr-206 lines the Mg(2+) pocket. Thr-206 is modified (phosphothreonine). A G3 motif region spans residues 221 to 230; sequence FKMVDVGGQR. The G4 motif stretch occupies residues 290 to 297; sequence ILFLNKMD. Residues 294–297 and Ala-351 each bind GTP; that span reads NKMD. Residues 349–354 form a G5 motif region; the sequence is TTAIDT.

Belongs to the G-alpha family. G(12) subfamily. G proteins are composed of 3 units; alpha, beta and gamma. The alpha chain contains the guanine nucleotide binding site. Interacts with UBXD5. Interacts (in GTP-bound form) with PPP5C (via TPR repeats); activates PPP5C phosphatase activity and translocates PPP5C to the cell membrane. Interacts with RGS22. Interacts (via N-terminus) with NAPA; the interaction promotes CDH5 localization to plasma membrane. Interacts with CTNND1 (via N-terminus); the interaction regulates CDH1-mediated cell-cell adhesion. Interacts with PPP2R1A; the interaction promotes protein phosphatase 2A activation causing dephosphorylation of MAPT. Interacts (in GTP-bound form) with ARHGEF1. Interacts (in GTP-bound form) with ARHGEF11 (via RGS domain). Interacts (in GTP-bound form) with ARHGEF12 (via RGS domain).

It localises to the cell membrane. The protein localises to the lateral cell membrane. It is found in the cytoplasm. Functionally, guanine nucleotide-binding proteins (G proteins) are involved as modulators or transducers in various transmembrane signaling systems. Activates effector molecule RhoA by binding and activating RhoGEFs (ARHGEF12/LARG). GNA12-dependent Rho signaling subsequently regulates transcription factor AP-1 (activating protein-1). GNA12-dependent Rho signaling also regulates protein phosphatese 2A activation causing dephosphorylation of its target proteins. Promotes tumor cell invasion and metastasis by activating RhoA/ROCK signaling pathway and up-regulating pro-inflammatory cytokine production. Inhibits CDH1-mediated cell adhesion in process independent from Rho activation. Together with NAPA promotes CDH5 localization to plasma membrane. May play a role in the control of cell migration through the TOR signaling cascade. This chain is Guanine nucleotide-binding protein subunit alpha-12 (Gna12), found in Rattus norvegicus (Rat).